The chain runs to 945 residues: Isoleucine--tRNA ligase (945 aa).

The short motif at 67–77 (PYANGQIHLGH) is the 'HIGH' region element. Residue glutamate 573 coordinates L-isoleucyl-5'-AMP. The 'KMSKS' region motif lies at 614–618 (KMSKS). Lysine 617 contacts ATP. Zn(2+) is bound by residues cysteine 908, cysteine 911, cysteine 928, and cysteine 931.

Belongs to the class-I aminoacyl-tRNA synthetase family. IleS type 1 subfamily. Monomer. Zn(2+) serves as cofactor.

Its subcellular location is the cytoplasm. It catalyses the reaction tRNA(Ile) + L-isoleucine + ATP = L-isoleucyl-tRNA(Ile) + AMP + diphosphate. In terms of biological role, catalyzes the attachment of isoleucine to tRNA(Ile). As IleRS can inadvertently accommodate and process structurally similar amino acids such as valine, to avoid such errors it has two additional distinct tRNA(Ile)-dependent editing activities. One activity is designated as 'pretransfer' editing and involves the hydrolysis of activated Val-AMP. The other activity is designated 'posttransfer' editing and involves deacylation of mischarged Val-tRNA(Ile). The sequence is that of Isoleucine--tRNA ligase from Acinetobacter baylyi (strain ATCC 33305 / BD413 / ADP1).